A 256-amino-acid polypeptide reads, in one-letter code: Cell division protein ZipA (256 aa).

Topologically, residues Met1–Gln6 are periplasmic. Residues Ile7–Ser27 form a helical membrane-spanning segment. Topologically, residues Tyr28–Thr256 are cytoplasmic.

The protein belongs to the ZipA family. In terms of assembly, interacts with FtsZ via their C-terminal domains.

It is found in the cell inner membrane. Essential cell division protein that stabilizes the FtsZ protofilaments by cross-linking them and that serves as a cytoplasmic membrane anchor for the Z ring. Also required for the recruitment to the septal ring of downstream cell division proteins. In Baumannia cicadellinicola subsp. Homalodisca coagulata, this protein is Cell division protein ZipA.